Consider the following 88-residue polypeptide: MANTTSAKKATRKIARRTIINKSRRTQMRGAVRSVEDAIKKGDREAALKAMANAEPQLMRAAQRNIIHKNNASRKVSRLTHQIAKLAK.

The protein belongs to the bacterial ribosomal protein bS20 family.

Functionally, binds directly to 16S ribosomal RNA. This Bradyrhizobium sp. (strain BTAi1 / ATCC BAA-1182) protein is Small ribosomal subunit protein bS20.